The chain runs to 37 residues: Cortex morphogenetic protein A (37 aa).

As to quaternary structure, can form a complex with SpoIVA and ClpX.

The protein localises to the forespore. Its function is as follows. Ensures proper spore envelope assembly. Represses premature cortex assembly until coat assembly successfully initiates. Also participates in a quality-control pathway that selectively removes defective sporulating cells through regulated cell death. Acts as an adaptator that delivers SpoIVA to the ClpXP proteolytic machinery for degradation, specifically in cells that improperly assemble the spore envelope. The chain is Cortex morphogenetic protein A from Bacillus subtilis (strain 168).